The following is a 133-amino-acid chain: Large ribosomal subunit protein bL17 (133 aa).

The protein belongs to the bacterial ribosomal protein bL17 family. As to quaternary structure, part of the 50S ribosomal subunit. Contacts protein L32.

This is Large ribosomal subunit protein bL17 from Idiomarina loihiensis (strain ATCC BAA-735 / DSM 15497 / L2-TR).